The sequence spans 276 residues: Undecaprenyl-diphosphatase (276 aa).

Transmembrane regions (helical) follow at residues 43–63 (RAMA…VWEF), 85–105 (LNLL…ADTI), 109–129 (LFNA…MLWA), 183–203 (AATE…AVYS), 218–238 (VFAI…RGLL), and 254–274 (IAFG…WASA).

Belongs to the UppP family.

The protein localises to the cell inner membrane. It catalyses the reaction di-trans,octa-cis-undecaprenyl diphosphate + H2O = di-trans,octa-cis-undecaprenyl phosphate + phosphate + H(+). In terms of biological role, catalyzes the dephosphorylation of undecaprenyl diphosphate (UPP). Confers resistance to bacitracin. In Pseudomonas syringae pv. syringae (strain B728a), this protein is Undecaprenyl-diphosphatase.